A 208-amino-acid chain; its full sequence is Large ribosomal subunit protein uL4 (208 aa).

The interval 44 to 79 is disordered; the sequence is QRQGTHKSKERSEISGSTRKIGRQKGGGGARRGDMN.

This sequence belongs to the universal ribosomal protein uL4 family. As to quaternary structure, part of the 50S ribosomal subunit.

One of the primary rRNA binding proteins, this protein initially binds near the 5'-end of the 23S rRNA. It is important during the early stages of 50S assembly. It makes multiple contacts with different domains of the 23S rRNA in the assembled 50S subunit and ribosome. Its function is as follows. Forms part of the polypeptide exit tunnel. This Bacteroides fragilis (strain YCH46) protein is Large ribosomal subunit protein uL4.